A 530-amino-acid polypeptide reads, in one-letter code: Alpha-(1,3)-fucosyltransferase 4 (530 aa).

Disordered stretches follow at residues 1–48 (MRRL…RAVP) and 66–113 (HLGG…TPAD). Residues 1 to 147 (MRRLWGAARK…GGRRRWRRGR (147 aa)) are Cytoplasmic-facing. A compositionally biased stretch (basic and acidic residues) spans 88 to 106 (ASGERQRRLEPQLQHESRC). The chain crosses the membrane as a helical; Signal-anchor for type II membrane protein span at residues 148-172 (GLPWTVCVLAAAGLTCTALITYACW). Residues 173-530 (GQLPPLPWAS…IRNLASWFER (358 aa)) are Lumenal-facing. N-linked (GlcNAc...) asparagine glycans are attached at residues Asn216 and Asn315.

This sequence belongs to the glycosyltransferase 10 family.

The protein localises to the golgi apparatus. It localises to the golgi stack membrane. It carries out the reaction a beta-D-galactosyl-(1-&gt;4)-N-acetyl-beta-D-glucosaminyl derivative + GDP-beta-L-fucose = a beta-D-galactosyl-(1-&gt;4)-[alpha-L-fucosyl-(1-&gt;3)]-N-acetyl-beta-D-glucosaminyl derivative + GDP + H(+). The enzyme catalyses an N-acetyl-alpha-neuraminyl-(2-&gt;3)-beta-D-galactosyl-(1-&gt;4)-N-acetyl-beta-D-glucosaminyl derivative + GDP-beta-L-fucose = an alpha-Neu5Ac-(2-&gt;3)-beta-D-Gal-(1-&gt;4)-[alpha-L-Fuc-(1-&gt;3)]-beta-D-GlcNAc derivative + GDP + H(+). It catalyses the reaction an alpha-Neu5Ac-(2-&gt;3)-beta-D-Gal-(1-&gt;4)-beta-D-GlcNAc-(1-&gt;3)-beta-D-Gal-(1-&gt;4)-beta-D-GlcNAc derivative + GDP-beta-L-fucose = an alpha-Neu5Ac-(2-&gt;3)-beta-D-Gal-(1-&gt;4)-beta-D-GlcNAc-(1-&gt;3)-beta-D-Gal-(1-&gt;4)-[alpha-L-Fuc-(1-&gt;3)]-beta-D-GlcNAc derivative + GDP + H(+). The catalysed reaction is an alpha-Neu5Ac-(2-&gt;3)-beta-D-Gal-(1-&gt;4)-beta-D-GlcNAc6S derivative + GDP-beta-L-fucose = an alpha-Neu5Ac-(2-&gt;3)-beta-D-Gal-(1-&gt;4)-[alpha-L-Fuc-(1-&gt;3)]-beta-D-GlcNAc6S derivative + GDP + H(+). Its pathway is protein modification; protein glycosylation. Its function is as follows. Catalyzes alpha(1-&gt;3) linkage of fucosyl moiety transferred from GDP-beta-L-fucose to N-acetyl glucosamine (GlcNAc) within type 2 lactosamine (LacNAc, Gal-beta(1-&gt;4)GlcNAc) glycan attached to N- or O-linked glycoproteins. Robustly fucosylates nonsialylated distal LacNAc unit of the polylactosamine chain to form Lewis X antigen (CD15), a glycan determinant known to mediate important cellular functions in development and immunity. Fucosylates with lower efficiency sialylated LacNAc acceptors to form sialyl Lewis X and 6-sulfo sialyl Lewis X determinants that serve as recognition epitopes for C-type lectins. Together with FUT7 contributes to SELE, SELL and SELP selectin ligand biosynthesis and selectin-dependent lymphocyte homing, leukocyte migration and blood leukocyte homeostasis. In a cell type specific manner, may also fucosylate the internal LacNAc unit of the polylactosamine chain to form VIM-2 antigen that serves as recognition epitope for SELE. This chain is Alpha-(1,3)-fucosyltransferase 4 (FUT4), found in Pan troglodytes (Chimpanzee).